Here is a 308-residue protein sequence, read N- to C-terminus: Porphobilinogen deaminase (308 aa).

Cys-241 is subject to S-(dipyrrolylmethanemethyl)cysteine.

This sequence belongs to the HMBS family. As to quaternary structure, monomer. It depends on dipyrromethane as a cofactor.

It catalyses the reaction 4 porphobilinogen + H2O = hydroxymethylbilane + 4 NH4(+). It functions in the pathway porphyrin-containing compound metabolism; protoporphyrin-IX biosynthesis; coproporphyrinogen-III from 5-aminolevulinate: step 2/4. Its function is as follows. Tetrapolymerization of the monopyrrole PBG into the hydroxymethylbilane pre-uroporphyrinogen in several discrete steps. This chain is Porphobilinogen deaminase, found in Staphylococcus saprophyticus subsp. saprophyticus (strain ATCC 15305 / DSM 20229 / NCIMB 8711 / NCTC 7292 / S-41).